A 339-amino-acid polypeptide reads, in one-letter code: Dihydroorotate dehydrogenase (quinone) (339 aa).

FMN is bound by residues alanine 61–lysine 65 and threonine 85. Residue lysine 65 coordinates substrate. Substrate is bound at residue asparagine 110 to phenylalanine 114. FMN contacts are provided by asparagine 138 and asparagine 171. A substrate-binding site is contributed by asparagine 171. Residue serine 174 is the Nucleophile of the active site. Asparagine 176 lines the substrate pocket. The FMN site is built by lysine 216 and threonine 244. Asparagine 245–threonine 246 contacts substrate. FMN is bound by residues glycine 267, glycine 296, and tyrosine 317–serine 318.

Belongs to the dihydroorotate dehydrogenase family. Type 2 subfamily. In terms of assembly, monomer. Requires FMN as cofactor.

Its subcellular location is the cell membrane. It carries out the reaction (S)-dihydroorotate + a quinone = orotate + a quinol. Its pathway is pyrimidine metabolism; UMP biosynthesis via de novo pathway; orotate from (S)-dihydroorotate (quinone route): step 1/1. In terms of biological role, catalyzes the conversion of dihydroorotate to orotate with quinone as electron acceptor. In Pseudomonas fluorescens (strain Pf0-1), this protein is Dihydroorotate dehydrogenase (quinone).